A 361-amino-acid chain; its full sequence is Glutamate 5-kinase (361 aa).

ATP is bound at residue lysine 7. Serine 47, aspartate 134, and asparagine 146 together coordinate substrate. ATP is bound by residues 166–167 (TD) and 209–215 (TGGMTTK). The region spanning 274-345 (LGTLQLDEGA…EAIETQMSTN (72 aa)) is the PUA domain.

The protein belongs to the glutamate 5-kinase family.

It is found in the cytoplasm. It carries out the reaction L-glutamate + ATP = L-glutamyl 5-phosphate + ADP. It participates in amino-acid biosynthesis; L-proline biosynthesis; L-glutamate 5-semialdehyde from L-glutamate: step 1/2. In terms of biological role, catalyzes the transfer of a phosphate group to glutamate to form L-glutamate 5-phosphate. The chain is Glutamate 5-kinase from Prochlorococcus marinus (strain MIT 9313).